The following is a 727-amino-acid chain: Protein TITANIA (727 aa).

Positions 1–136 (MFGDSDGSKD…LASLLQPVPA (136 aa)) are disordered. Residues 14–25 (GAPPSTTDPPFP) show a composition bias toward pro residues. Residues 67–88 (DDGKHCVERDFLHLSAPKRGDP) are compositionally biased toward basic and acidic residues. Over residues 104 to 117 (DSLQLSLSLNSDGP) the composition is skewed to low complexity. The PHD-type zinc-finger motif lies at 406-470 (ACTCSVCHKF…QFQCLACNHS (65 aa)). The stretch at 629-697 (VKCKEAEAKL…LEELKMLENS (69 aa)) forms a coiled coil.

As to expression, widely expressed.

The protein resides in the nucleus. Probable transcription factor that functions as a regulator of metal transporter genes responsible for essential metals delivery to shoots and normal plant growth. Required for the maintenance of metal transporter gene expression, such as IRT1, IRT2, ZIP1, ZIP9, NRAMP1 and NRAMP5. In Oryza sativa subsp. japonica (Rice), this protein is Protein TITANIA.